Reading from the N-terminus, the 178-residue chain is Acireductone dioxygenase (178 aa).

Residues histidine 82, histidine 84, glutamate 88, and histidine 127 each coordinate Fe(2+). Positions 82, 84, 88, and 127 each coordinate Ni(2+). The residue at position 157 (serine 157) is a Phosphoserine.

The protein belongs to the acireductone dioxygenase (ARD) family. It depends on Fe(2+) as a cofactor. Ni(2+) is required as a cofactor.

The protein localises to the cytoplasm. It is found in the nucleus. The enzyme catalyses 1,2-dihydroxy-5-(methylsulfanyl)pent-1-en-3-one + O2 = 4-methylsulfanyl-2-oxobutanoate + formate + 2 H(+). It catalyses the reaction 1,2-dihydroxy-5-(methylsulfanyl)pent-1-en-3-one + O2 = 3-(methylsulfanyl)propanoate + CO + formate + 2 H(+). It participates in amino-acid biosynthesis; L-methionine biosynthesis via salvage pathway; L-methionine from S-methyl-5-thio-alpha-D-ribose 1-phosphate: step 5/6. Catalyzes 2 different reactions between oxygen and the acireductone 1,2-dihydroxy-3-keto-5-methylthiopentene (DHK-MTPene) depending upon the metal bound in the active site. Fe-containing acireductone dioxygenase (Fe-ARD) produces formate and 2-keto-4-methylthiobutyrate (KMTB), the alpha-ketoacid precursor of methionine in the methionine recycle pathway. Ni-containing acireductone dioxygenase (Ni-ARD) produces methylthiopropionate, carbon monoxide and formate, and does not lie on the methionine recycle pathway. This chain is Acireductone dioxygenase (adi1), found in Schizosaccharomyces pombe (strain 972 / ATCC 24843) (Fission yeast).